The primary structure comprises 254 residues: Probable phosphatase Sbal223_2880 (254 aa).

The Zn(2+) site is built by histidine 8, histidine 10, histidine 16, histidine 41, glutamate 74, histidine 102, histidine 132, aspartate 193, and histidine 195.

It belongs to the PHP family. Zn(2+) is required as a cofactor.

The protein is Probable phosphatase Sbal223_2880 of Shewanella baltica (strain OS223).